The following is a 1110-amino-acid chain: MTDVSAAAGGATAPAETAATSSSASKPLTNGANKTSTAMAAPTATPTTAATASGAAEAGAITSVAGISNQVKLEHHHHRQSNNNRPVAPYPPVPAAKPKPTPTPESKFKSTSREPGMSSSSSSAQQDVDEVARLFEEKPEAFEKWLTERAPPEALSRLQEFIESRKPLKRPSVTSDLFQQWMSASPTVQQKSPRSLSNSSASSTLPECRRHLMDLDEGELFMELIRDVANELDIDVLCHKILVNVGLLTHADRGSLFLAKGTPHNKYLVAKLFDVTQKTALKDAVTRASAEEIIIPFGIGIAGMVAQTKQMINIKEAYKDARFNCEIDLKTGYKTNAILCMPICNYEGDIIGVAQIINKTNGCMEFDEHDVEIFRRYLTFCGIGIQNAQLFEMSVQEYRRNQILLNLARSIFEEQNNLECLVTKIMTEARELLNCERCSVFLVDLDCCEASHLEKIIEKPNQPEQRPTRAIMPGDSFDEKKMRNRFTVLFELGGEYQAASVSRPSKTELSTSTLAQIAQFVATTGQTVNICDVHEWVRDHNQIRAESEIDSTQAILCMPIVNAQKVVIGVAQLINKANGVPFTESDASIFEAFAIFCGLGIHNTQMYENACKLMAKQKVALECLSYHATASQDQTEKLTQDAIAEAESYNLYSFTFTDFELVDDDTCRAVLRMFLQCNLVSQFQIPYDVLCRWVLSVRKNYRPVKYHNWRHALNVAQTMFAMLKTGKMERFMTDLEILGLLVACLCHDLDHRGTNNAFQTKTESPLAILYTTSTMEHHHFDQCVMILNSEGNNIFQALSPEDYRSVMKTVESAILSTDLAMYFKKRNAFLELVENGEFDWQGEEKKDLLCGMMMTACDVSAIAKPWEVQHKVAKLVADEFFDQGDLEKLQLNTQPVAMMDRERKDELPKMQVGFIDVICLPLYRVLCDTFPWITPLYEGTLENRRNWQDLAEKVEMGLTWIDHDTIDKPVEEFAGCADEEIKDIEFTVTTLNCNQQAQHGAGAGGDDSHTPEHQRSGSRLSMKKTGALGKAVRSKLSKTLYNSMDGSKPKTSLKLLESHVSEDMDDKSPTSPSQPHAGGSVGRMSASSSTSSAGTVVDKSKKRSKLCSLL.

2 stretches are compositionally biased toward low complexity: residues 1 to 25 and 35 to 55; these read MTDV…SSAS and TSTA…ASGA. 3 disordered regions span residues 1 to 55, 67 to 128, and 184 to 203; these read MTDV…ASGA, ISNQ…QQDV, and ASPT…SASS. Pro residues predominate over residues 88–103; the sequence is APYPPVPAAKPKPTPT. Low complexity predominate over residues 192–203; it reads SPRSLSNSSASS. GAF domains lie at 233–385 and 417–601; these read DIDV…GIGI and NLEC…GLGI. The region spanning 631-954 is the PDEase domain; the sequence is SQDQTEKLTQ…RNWQDLAEKV (324 aa). The active-site Proton donor is H707. H711, H747, D748, and D858 together coordinate a divalent metal cation. Disordered regions lie at residues 997–1028 and 1040–1110; these read AQHG…TGAL and LYNS…CSLL. 2 stretches are compositionally biased toward basic and acidic residues: residues 1006–1015 and 1056–1068; these read DDSHTPEHQR and LESH…DDKS. Positions 1082–1097 are enriched in low complexity; that stretch reads GRMSASSSTSSAGTVV. A compositionally biased stretch (basic residues) spans 1100–1110; it reads SKKRSKLCSLL. C1107 bears the Cysteine methyl ester mark. Residue C1107 is the site of S-farnesyl cysteine attachment. The propeptide at 1108 to 1110 is removed in mature form; that stretch reads SLL.

It belongs to the cyclic nucleotide phosphodiesterase family. Interacts with PrBP. The cofactor is a divalent metal cation.

It localises to the cell membrane. The enzyme catalyses 3',5'-cyclic GMP + H2O = GMP + H(+). Its function is as follows. Has a role regulating cGMP transport in Malpighian tubule principal cells. The sequence is that of cGMP-specific 3',5'-cyclic phosphodiesterase from Drosophila pseudoobscura pseudoobscura (Fruit fly).